A 355-amino-acid chain; its full sequence is 3-dehydroquinate synthase (355 aa).

NAD(+) contacts are provided by residues 71–76 (EGEASK), 105–109 (GVVGD), 129–130 (TS), lysine 142, lysine 151, and 169–172 (TLNT). Positions 184, 246, and 263 each coordinate Zn(2+).

The protein belongs to the sugar phosphate cyclases superfamily. Dehydroquinate synthase family. Requires NAD(+) as cofactor. The cofactor is Co(2+). It depends on Zn(2+) as a cofactor.

The protein resides in the cytoplasm. It catalyses the reaction 7-phospho-2-dehydro-3-deoxy-D-arabino-heptonate = 3-dehydroquinate + phosphate. The protein operates within metabolic intermediate biosynthesis; chorismate biosynthesis; chorismate from D-erythrose 4-phosphate and phosphoenolpyruvate: step 2/7. Its function is as follows. Catalyzes the conversion of 3-deoxy-D-arabino-heptulosonate 7-phosphate (DAHP) to dehydroquinate (DHQ). This chain is 3-dehydroquinate synthase, found in Streptococcus mutans serotype c (strain ATCC 700610 / UA159).